The chain runs to 706 residues: Dual specificity calcium/calmodulin-dependent 3',5'-cyclic nucleotide phosphodiesterase 1C (706 aa).

Position 1 is an N-acetylmethionine (Met1). The interval 123–146 (EKPRFKSIVHAVQAGIFVERMYRR) is calmodulin-binding. Positions 151 to 528 (VGLSYPPAVI…ERWRAKVPKE (378 aa)) constitute a PDEase domain. The active-site Proton donor is His228. His232, His268, Asp269, and Asp376 together coordinate Zn(2+). Residue Asp269 participates in Mg(2+) binding. Disordered regions lie at residues 453 to 497 (LIDE…INNS) and 524 to 655 (KVPK…IKPP). 2 stretches are compositionally biased toward polar residues: residues 456 to 476 (ESSQ…INSS) and 483 to 497 (VKSS…INNS). 3 stretches are compositionally biased toward basic and acidic residues: residues 524 to 554 (KVPK…EAKS), 580 to 597 (RKGD…KAGE), and 603 to 630 (DLKD…DGTK). Polar residues predominate over residues 638–647 (APSTSSTSRI).

This sequence belongs to the cyclic nucleotide phosphodiesterase family. PDE1 subfamily. As to quaternary structure, homodimer. Requires Zn(2+) as cofactor. Mg(2+) serves as cofactor. As to expression, highly expressed in testis and at moderate levels in heart. Expressed at a moderate level in brain, the cerebellum, testis, heart and olfactory epithelium. In terms of tissue distribution, highly expressed in olfactory epithelium and at very low levels, if any, in other tissues. In the cochlea, expressed in the inner and outer hair cells (at protein level). In the brain, highly expressed in the neurons of the granule layer of the cerebellum, some Purkinje cells, the central amygdaloid nucleus, and the interpolar spinal trigem nucleus and, at moderate levels, in the glomerular and external plexiform layer of the olfactory bulb as well as in parts of the caudate-putamen and olfactory tubercle.

The protein resides in the lysosome. It catalyses the reaction a nucleoside 3',5'-cyclic phosphate + H2O = a nucleoside 5'-phosphate + H(+). It carries out the reaction 3',5'-cyclic GMP + H2O = GMP + H(+). The catalysed reaction is 3',5'-cyclic AMP + H2O = AMP + H(+). With respect to regulation, type I PDE are activated by the binding of calmodulin in the presence of Ca(2+). Different splice variants may have different sensitivities to Ca(2+). Exhibits a higher sensitivity to Ca(2+) stimulation than isoforms 1 and 2. Calmodulin-dependent cyclic nucleotide phosphodiesterase with a dual specificity for cAMP and cGMP, which are key regulators of many important physiological processes. Exhibits high affinity for both cAMP and cGMP. Modulates the amplitude and duration of the cAMP signal in sensory cilia in response to odorant stimulation, hence contributing to the generation of action potentials. Regulates smooth muscle cell proliferation. Regulates the stability of growth factor receptors, including PDGFRB. This chain is Dual specificity calcium/calmodulin-dependent 3',5'-cyclic nucleotide phosphodiesterase 1C, found in Mus musculus (Mouse).